Here is a 522-residue protein sequence, read N- to C-terminus: Glutathione reductase, mitochondrial (522 aa).

The N-terminal 43 residues, 1 to 43 (MALLPRALSAGAGPSWRRAARAFRGFLLLLPEPAALTRALSRA), are a transit peptide targeting the mitochondrion. 2 residues coordinate FAD: Ser-74 and Gly-75. Ser-74 is a glutathione binding site. Arg-81 provides a ligand contact to glutathione. Glu-94 is a binding site for FAD. Position 97 is an N6-acetyllysine (Lys-97). Thr-101, Cys-102, and Lys-110 together coordinate FAD. Cys-102 and Cys-107 are oxidised to a cystine. Tyr-158 contacts glutathione. Ala-174 contributes to the FAD binding site. NADP(+)-binding residues include Ala-239, Ile-242, Glu-245, Arg-262, Arg-268, and Gly-334. An FAD-binding site is contributed by Asp-375. Leu-381 is a binding site for NADP(+). Thr-383 is an FAD binding site. Arg-391 provides a ligand contact to glutathione. Residue Val-414 coordinates NADP(+). His-511 is a binding site for FAD. His-511 functions as the Proton acceptor in the catalytic mechanism.

Belongs to the class-I pyridine nucleotide-disulfide oxidoreductase family. In terms of assembly, homodimer; disulfide-linked. The cofactor is FAD.

It localises to the mitochondrion. Its subcellular location is the cytoplasm. The enzyme catalyses 2 glutathione + NADP(+) = glutathione disulfide + NADPH + H(+). Catalyzes the reduction of glutathione disulfide (GSSG) to reduced glutathione (GSH). Constitutes the major mechanism to maintain a high GSH:GSSG ratio in the cytosol. This chain is Glutathione reductase, mitochondrial (GSR), found in Homo sapiens (Human).